We begin with the raw amino-acid sequence, 214 residues long: Adenylate kinase (214 aa).

ATP is bound at residue 10 to 15 (GAGKGT). The segment at 30–59 (STGDMLRAAVKAQSELGRQAKALMDAGKLV) is NMP. AMP is bound by residues Thr-31, Arg-36, 57 to 59 (KLV), 85 to 88 (GFPR), and Gln-92. The interval 122–159 (GRRVHAPSGRVYHVKFNPPKQEGKDDVTGELLTSRKDD) is LID. ATP is bound by residues Arg-123 and 132–133 (VY). AMP-binding residues include Arg-156 and Arg-167. Arg-200 provides a ligand contact to ATP.

This sequence belongs to the adenylate kinase family. As to quaternary structure, monomer.

Its subcellular location is the cytoplasm. The catalysed reaction is AMP + ATP = 2 ADP. It participates in purine metabolism; AMP biosynthesis via salvage pathway; AMP from ADP: step 1/1. Catalyzes the reversible transfer of the terminal phosphate group between ATP and AMP. Plays an important role in cellular energy homeostasis and in adenine nucleotide metabolism. The sequence is that of Adenylate kinase from Sodalis glossinidius (strain morsitans).